The chain runs to 180 residues: Protein YOP1 (180 aa).

N-acetylserine is present on Ser2. Positions 2-17 (SEYASSIHSQMKQFDT) are interaction with YIP1. Over 2–35 (SEYASSIHSQMKQFDTKYSGNRILQQLENKTNLP) the chain is Cytoplasmic. The chain crosses the membrane as a helical span at residues 36–55 (KSYLVAGLGFAYLLLIFINV). At 56 to 57 (GG) the chain is on the lumenal side. Residues 58 to 78 (VGEILSNFAGFVLPAYLSLVA) form a helical membrane-spanning segment. The Cytoplasmic segment spans residues 79–88 (LKTPTSTDDT). A helical membrane pass occupies residues 89 to 105 (QLLTYWIVFSFLSVIEF). Residues 106 to 108 (WSK) are Lumenal-facing. A helical membrane pass occupies residues 109–127 (AILYLIPFYWFLKTVFLIY). Residues 128-180 (IALPQTGGARMIYQKIVAPLTDRYILRDVSKTEKDEIRASVNEASKATGASVH) are Cytoplasmic-facing.

This sequence belongs to the DP1 family. As to quaternary structure, oligomer. Interacts with YIP1.

Its subcellular location is the endoplasmic reticulum membrane. The protein resides in the golgi apparatus membrane. Its function is as follows. Required to generate and maintain the structure of the tubular endoplasmic reticulum network and the vacuole. Induces high curvature in membranes and causes membrane tubule formation. Involved in membrane/vesicle trafficking. The polypeptide is Protein YOP1 (YOP1) (Saccharomyces cerevisiae (strain ATCC 204508 / S288c) (Baker's yeast)).